A 353-amino-acid chain; its full sequence is Photosystem II protein D1 (353 aa).

N-acetylthreonine is present on threonine 2. Phosphothreonine is present on threonine 2. 3 helical membrane passes run 29-46 (YIGW…TATS), 118-133 (HFLL…EWEL), and 142-156 (WIAV…AATA). Residue histidine 118 coordinates chlorophyll a. Tyrosine 126 is a binding site for pheophytin a. The [CaMn4O5] cluster site is built by aspartate 170 and glutamate 189. The chain crosses the membrane as a helical span at residues 197–218 (FHMLGVAGVFGGSLFSAMHGSL). Histidine 198 lines the chlorophyll a pocket. Residues histidine 215 and 264-265 (SF) contribute to the a quinone site. Histidine 215 contributes to the Fe cation binding site. Histidine 272 is a binding site for Fe cation. A helical transmembrane segment spans residues 274–288 (FLAAWPVVGIWFTAL). Histidine 332, glutamate 333, aspartate 342, and alanine 344 together coordinate [CaMn4O5] cluster. A propeptide spanning residues 345-353 (SVEAPSTNG) is cleaved from the precursor.

Belongs to the reaction center PufL/M/PsbA/D family. In terms of assembly, PSII is composed of 1 copy each of membrane proteins PsbA, PsbB, PsbC, PsbD, PsbE, PsbF, PsbH, PsbI, PsbJ, PsbK, PsbL, PsbM, PsbT, PsbX, PsbY, PsbZ, Psb30/Ycf12, at least 3 peripheral proteins of the oxygen-evolving complex and a large number of cofactors. It forms dimeric complexes. The D1/D2 heterodimer binds P680, chlorophylls that are the primary electron donor of PSII, and subsequent electron acceptors. It shares a non-heme iron and each subunit binds pheophytin, quinone, additional chlorophylls, carotenoids and lipids. D1 provides most of the ligands for the Mn4-Ca-O5 cluster of the oxygen-evolving complex (OEC). There is also a Cl(-1) ion associated with D1 and D2, which is required for oxygen evolution. The PSII complex binds additional chlorophylls, carotenoids and specific lipids. serves as cofactor. Post-translationally, tyr-161 forms a radical intermediate that is referred to as redox-active TyrZ, YZ or Y-Z. In terms of processing, C-terminally processed by CTPA; processing is essential to allow assembly of the oxygen-evolving complex and thus photosynthetic growth.

Its subcellular location is the plastid. The protein localises to the chloroplast thylakoid membrane. The enzyme catalyses 2 a plastoquinone + 4 hnu + 2 H2O = 2 a plastoquinol + O2. In terms of biological role, photosystem II (PSII) is a light-driven water:plastoquinone oxidoreductase that uses light energy to abstract electrons from H(2)O, generating O(2) and a proton gradient subsequently used for ATP formation. It consists of a core antenna complex that captures photons, and an electron transfer chain that converts photonic excitation into a charge separation. The D1/D2 (PsbA/PsbD) reaction center heterodimer binds P680, the primary electron donor of PSII as well as several subsequent electron acceptors. The protein is Photosystem II protein D1 of Acorus calamus (Sweet flag).